Consider the following 522-residue polypeptide: Glucose-1-phosphate adenylyltransferase large subunit 1, chloroplastic (522 aa).

A chloroplast-targeting transit peptide spans Met-1–Arg-54. Ser-428 is subject to Phosphoserine.

This sequence belongs to the bacterial/plant glucose-1-phosphate adenylyltransferase family. Heterotetramer. In terms of tissue distribution, leaves.

It is found in the plastid. It localises to the chloroplast. It catalyses the reaction alpha-D-glucose 1-phosphate + ATP + H(+) = ADP-alpha-D-glucose + diphosphate. The protein operates within glycan biosynthesis; starch biosynthesis. Its activity is regulated as follows. Activated by 3'phosphoglycerate, inhibited by orthophosphate. Allosteric regulation. Functionally, this protein plays a role in synthesis of starch. It catalyzes the synthesis of the activated glycosyl donor, ADP-glucose from Glc-1-P and ATP. The chain is Glucose-1-phosphate adenylyltransferase large subunit 1, chloroplastic (ADG2) from Arabidopsis thaliana (Mouse-ear cress).